Consider the following 309-residue polypeptide: Protein FdhE (309 aa).

It belongs to the FdhE family.

The protein localises to the cytoplasm. Functionally, necessary for formate dehydrogenase activity. The polypeptide is Protein FdhE (Escherichia coli (strain SMS-3-5 / SECEC)).